Reading from the N-terminus, the 944-residue chain is Translation initiation factor IF-2 (944 aa).

Residues 55–81 show a composition bias toward low complexity; that stretch reads LTGQAAAPAAAPSSAPRPGARSSAPKP. Positions 55–329 are disordered; sequence LTGQAAAPAA…RTKRAEFELR (275 aa). Positions 82–92 are enriched in pro residues; the sequence is GGRPTPGPQPT. A compositionally biased stretch (low complexity) spans 93–107; it reads AAPEVEAPEASDVPV. Residues 123–135 are compositionally biased toward basic and acidic residues; it reads ASRKAAAEEKAQA. Composition is skewed to low complexity over residues 136–153 and 211–222; these read EKSA…ETPS and GQRPAAGAAGPR. The segment covering 223–236 has biased composition (pro residues); the sequence is PAAPRPGSPRPGAP. Residues 244-257 are compositionally biased toward low complexity; the sequence is GARPAGFGQRPAGA. Residues 258–269 are compositionally biased toward gly residues; that stretch reads GRPGGAPGGAGR. The span at 270–283 shows a compositional bias: low complexity; that stretch reads PGAPAAGGFQRPAG. The segment covering 284 to 310 has biased composition (gly residues); the sequence is GFAGRPGGGGRGRGPGGGTAGAFGRGG. Residues 311–322 are compositionally biased toward basic residues; the sequence is GKSKSRKSKRTK. Positions 437 to 611 constitute a tr-type G domain; the sequence is IRPPVVTVMG…LTADAGLDLR (175 aa). Residues 446–453 form a G1 region; the sequence is GHVDHGKT. Residue 446–453 coordinates GTP; that stretch reads GHVDHGKT. The interval 471–475 is G2; it reads GITQH. The interval 496 to 499 is G3; sequence DTPG. GTP is bound by residues 496 to 500 and 550 to 553; these read DTPGH and NKVD. Residues 550-553 are G4; sequence NKVD. Residues 586–588 are G5; it reads SAL.

The protein belongs to the TRAFAC class translation factor GTPase superfamily. Classic translation factor GTPase family. IF-2 subfamily.

It is found in the cytoplasm. One of the essential components for the initiation of protein synthesis. Protects formylmethionyl-tRNA from spontaneous hydrolysis and promotes its binding to the 30S ribosomal subunits. Also involved in the hydrolysis of GTP during the formation of the 70S ribosomal complex. The protein is Translation initiation factor IF-2 of Clavibacter michiganensis subsp. michiganensis (strain NCPPB 382).